Reading from the N-terminus, the 318-residue chain is Biotin synthase (318 aa).

Residues 44–273 enclose the Radical SAM core domain; it reads LCGNKFDLCT…TVQIRLAGGR (230 aa). [4Fe-4S] cluster contacts are provided by Cys-62, Cys-66, and Cys-69. Ser-106, Cys-138, Cys-198, and Arg-268 together coordinate [2Fe-2S] cluster.

It belongs to the radical SAM superfamily. Biotin synthase family. In terms of assembly, homodimer. [4Fe-4S] cluster serves as cofactor. The cofactor is [2Fe-2S] cluster.

The catalysed reaction is (4R,5S)-dethiobiotin + (sulfur carrier)-SH + 2 reduced [2Fe-2S]-[ferredoxin] + 2 S-adenosyl-L-methionine = (sulfur carrier)-H + biotin + 2 5'-deoxyadenosine + 2 L-methionine + 2 oxidized [2Fe-2S]-[ferredoxin]. The protein operates within cofactor biosynthesis; biotin biosynthesis; biotin from 7,8-diaminononanoate: step 2/2. In terms of biological role, catalyzes the conversion of dethiobiotin (DTB) to biotin by the insertion of a sulfur atom into dethiobiotin via a radical-based mechanism. The protein is Biotin synthase of Clostridium botulinum (strain Langeland / NCTC 10281 / Type F).